Here is a 302-residue protein sequence, read N- to C-terminus: Aspartate carbamoyltransferase catalytic subunit (302 aa).

Carbamoyl phosphate is bound by residues R53 and T54. K82 contacts L-aspartate. R103, H131, and Q134 together coordinate carbamoyl phosphate. L-aspartate contacts are provided by R164 and R223. L260 and P261 together coordinate carbamoyl phosphate.

Belongs to the aspartate/ornithine carbamoyltransferase superfamily. ATCase family. In terms of assembly, heterooligomer of catalytic and regulatory chains.

It carries out the reaction carbamoyl phosphate + L-aspartate = N-carbamoyl-L-aspartate + phosphate + H(+). It participates in pyrimidine metabolism; UMP biosynthesis via de novo pathway; (S)-dihydroorotate from bicarbonate: step 2/3. Catalyzes the condensation of carbamoyl phosphate and aspartate to form carbamoyl aspartate and inorganic phosphate, the committed step in the de novo pyrimidine nucleotide biosynthesis pathway. This Methanococcus vannielii (strain ATCC 35089 / DSM 1224 / JCM 13029 / OCM 148 / SB) protein is Aspartate carbamoyltransferase catalytic subunit.